The sequence spans 585 residues: Putative lipase ATG15 (585 aa).

Residues 1–21 traverse the membrane as a helical; Signal-anchor for type II membrane protein segment; that stretch reads MMGLDLLVSLLALSVSPCIAA. Residues 22 to 585 lie on the Lumenal side of the membrane; that stretch reads TRSPLQIPVL…SASPPITSPP (564 aa). N-linked (GlcNAc...) asparagine glycosylation is found at Asn171, Asn193, and Asn275. Ser291 (charge relay system) is an active-site residue. N-linked (GlcNAc...) asparagine glycosylation is found at Asn340 and Asn437. The disordered stretch occupies residues 500–526; sequence TTTSTVPTASPAPTITPTSPPTTTAST.

The protein belongs to the AB hydrolase superfamily. Lipase family. Binds to both phosphatidylinositol (PI) and phosphatidylinositol 3,5-bisphosphate (PIP2).

The protein localises to the endosome. It localises to the multivesicular body membrane. It is found in the prevacuolar compartment membrane. The enzyme catalyses a triacylglycerol + H2O = a diacylglycerol + a fatty acid + H(+). In terms of biological role, lipase which is essential for lysis of subvacuolar cytoplasm to vacuole targeted bodies and intravacuolar autophagic bodies. Involved in the lysis of intravacuolar multivesicular body (MVB) vesicles. The intravacuolar membrane disintegration by ATG15 is critical to life span extension. The sequence is that of Putative lipase ATG15 (ATG15) from Ajellomyces capsulatus (strain NAm1 / WU24) (Darling's disease fungus).